The sequence spans 120 residues: Large ribosomal subunit protein uL24 (120 aa).

It belongs to the universal ribosomal protein uL24 family. In terms of assembly, part of the 50S ribosomal subunit.

One of two assembly initiator proteins, it binds directly to the 5'-end of the 23S rRNA, where it nucleates assembly of the 50S subunit. Its function is as follows. One of the proteins that surrounds the polypeptide exit tunnel on the outside of the subunit. In Pseudarthrobacter chlorophenolicus (strain ATCC 700700 / DSM 12829 / CIP 107037 / JCM 12360 / KCTC 9906 / NCIMB 13794 / A6) (Arthrobacter chlorophenolicus), this protein is Large ribosomal subunit protein uL24.